The sequence spans 467 residues: Ribulose bisphosphate carboxylase large chain (467 aa).

K5 carries the N6,N6,N6-trimethyllysine modification. Substrate-binding residues include N114 and T164. K166 (proton acceptor) is an active-site residue. K168 is a binding site for substrate. Residues K192, D194, and E195 each contribute to the Mg(2+) site. K192 is subject to N6-carboxylysine. H285 functions as the Proton acceptor in the catalytic mechanism. Substrate is bound by residues R286, H318, and S370.

This sequence belongs to the RuBisCO large chain family. Type I subfamily. As to quaternary structure, heterohexadecamer of 8 large chains and 8 small chains; disulfide-linked. The disulfide link is formed within the large subunit homodimers. Requires Mg(2+) as cofactor. The disulfide bond which can form in the large chain dimeric partners within the hexadecamer appears to be associated with oxidative stress and protein turnover.

The protein resides in the plastid. It is found in the chloroplast. The catalysed reaction is 2 (2R)-3-phosphoglycerate + 2 H(+) = D-ribulose 1,5-bisphosphate + CO2 + H2O. The enzyme catalyses D-ribulose 1,5-bisphosphate + O2 = 2-phosphoglycolate + (2R)-3-phosphoglycerate + 2 H(+). RuBisCO catalyzes two reactions: the carboxylation of D-ribulose 1,5-bisphosphate, the primary event in carbon dioxide fixation, as well as the oxidative fragmentation of the pentose substrate in the photorespiration process. Both reactions occur simultaneously and in competition at the same active site. In Jasminum simplicifolium subsp. suavissimum (Native jasmine), this protein is Ribulose bisphosphate carboxylase large chain.